Reading from the N-terminus, the 325-residue chain is Elongation factor P--(R)-beta-lysine ligase (325 aa).

Residue 76–78 (SPE) coordinates substrate. ATP-binding positions include 100–102 (RNE) and asparagine 109. Tyrosine 118 lines the substrate pocket. 244 to 245 (EL) lines the ATP pocket. Glutamate 251 lines the substrate pocket. Glycine 300 is an ATP binding site.

This sequence belongs to the class-II aminoacyl-tRNA synthetase family. EpmA subfamily. Homodimer.

It catalyses the reaction D-beta-lysine + L-lysyl-[protein] + ATP = N(6)-((3R)-3,6-diaminohexanoyl)-L-lysyl-[protein] + AMP + diphosphate + H(+). With EpmB is involved in the beta-lysylation step of the post-translational modification of translation elongation factor P (EF-P). Catalyzes the ATP-dependent activation of (R)-beta-lysine produced by EpmB, forming a lysyl-adenylate, from which the beta-lysyl moiety is then transferred to the epsilon-amino group of a conserved specific lysine residue in EF-P. This chain is Elongation factor P--(R)-beta-lysine ligase, found in Hamiltonella defensa subsp. Acyrthosiphon pisum (strain 5AT).